Here is a 427-residue protein sequence, read N- to C-terminus: MDKIVVQGGDNRLVGSVTIEGAKNAVLPLLAATILASEGKTVLQNVPILSDVFIMNQVVGGLNAKVDFDEEAHLVKVDATGDITEEAPYKYVSKMRASIVVLGPILARVGHAKVSMPGGCTIGSRPIDLHLKGLEAMGVKISQTAGYIEAKAERLHGAHIYMDFPSVGATQNLMMAATLADGVTVIENAAREPEIVDLAILLNEMGAKVKGAGTETITITGVEKLHGTTHNVVQDRIEAGTFMVAAAMTGGDVLIRDAVWEHNRPLIAKLLEMGVEVIEEDEGIRVRSQLENLKAVHVKTLPHPGFPTDMQAQFTALMTVAKGESTMVETVFENRFQHLEEMRRMGLHSEIIRDTARIVGGQPLQGAEVLSTDLRASAALILTGLVAQGETVVGKLVHLDRGYYGFHEKLAQLGAKIQRIEANDEDE.

Lys-23–Asn-24 lines the phosphoenolpyruvate pocket. Residue Arg-96 coordinates UDP-N-acetyl-alpha-D-glucosamine. Cys-120 (proton donor) is an active-site residue. The residue at position 120 (Cys-120) is a 2-(S-cysteinyl)pyruvic acid O-phosphothioketal. UDP-N-acetyl-alpha-D-glucosamine-binding positions include Arg-125–Leu-129, Asp-309, and Val-331.

It belongs to the EPSP synthase family. MurA subfamily.

It localises to the cytoplasm. The catalysed reaction is phosphoenolpyruvate + UDP-N-acetyl-alpha-D-glucosamine = UDP-N-acetyl-3-O-(1-carboxyvinyl)-alpha-D-glucosamine + phosphate. It participates in cell wall biogenesis; peptidoglycan biosynthesis. Its function is as follows. Cell wall formation. Adds enolpyruvyl to UDP-N-acetylglucosamine. This chain is UDP-N-acetylglucosamine 1-carboxyvinyltransferase 1, found in Streptococcus pneumoniae (strain ATCC BAA-255 / R6).